Here is a 245-residue protein sequence, read N- to C-terminus: tRNA (guanine-N(1)-)-methyltransferase (245 aa).

S-adenosyl-L-methionine is bound by residues G111 and 131–136 (IGDYVL).

It belongs to the RNA methyltransferase TrmD family. In terms of assembly, homodimer.

It localises to the cytoplasm. The enzyme catalyses guanosine(37) in tRNA + S-adenosyl-L-methionine = N(1)-methylguanosine(37) in tRNA + S-adenosyl-L-homocysteine + H(+). Its function is as follows. Specifically methylates guanosine-37 in various tRNAs. The sequence is that of tRNA (guanine-N(1)-)-methyltransferase from Staphylococcus haemolyticus (strain JCSC1435).